Reading from the N-terminus, the 471-residue chain is MTNPWIVSLLLGATLVQANLYPPAVLNLGPEVIKKHLTQALENHDATAILQELPLLRGMQDKSGSIPILDSFVNTVLRYIIWMKVTSANILQLVVQPSTYDQELVVRIPLDMVAGLNTPLIKTIVEFQMSTEVQALIRVERSKNGPARLNLSDCSSNESTLRLSLLHKLSFVVNSLAKNVMNLLMPALPQIVKSHLCPVIQQAFDDMYEDFLRLTTAPIALSPGALEFDLLSPAIQDSNILFNLKAKLLDSQARVTNWFNGSATPLMETTPDRAPFSLTVRQDLVNAIVTTLIPQEELVILLRFVIPDVARQLQMDIKEINAEAANKLGPTQMLKIFTHSTPHIVLNEGGATAAQSVVLEVFPTNTDVRPFFSLGIEASYEAQFFIAENRLMLNFNNVSIERIKLMISDIKLFDPEVLKDTLTKILEYTLLPNENGKLRTGIPMSMPKALGYEKAMWSVSKGALKLTPASS.

Residues 1–18 (MTNPWIVSLLLGATLVQA) form the signal peptide. Residues N150, N157, N260, and N397 are each glycosylated (N-linked (GlcNAc...) asparagine). Residues C154 and C197 are joined by a disulfide bond.

This sequence belongs to the BPI/LBP/Plunc superfamily. Plunc family.

The protein resides in the secreted. In terms of biological role, may play a role in innate immunity in mouth, nose and lungs. Binds bacterial lipopolysaccharide (LPS) and modulates the cellular responses to LPS. This Rattus norvegicus (Rat) protein is BPI fold-containing family B member 1 (Bpifb1).